Here is a 262-residue protein sequence, read N- to C-terminus: Sperm microtubule inner protein 6 (262 aa).

The protein belongs to the SPMIP6 family. As to quaternary structure, microtubule inner protein component of sperm flagellar doublet microtubules. Interacts with alpha-tubulin.

The protein localises to the cytoplasm. It is found in the cytoskeleton. It localises to the nucleus. The protein resides in the mitochondrion. Its subcellular location is the flagellum axoneme. In terms of biological role, may participate in intramanchette transport and midpiece formation of the sperm tail. May play a potential role in somatic cell proliferation. The protein is Sperm microtubule inner protein 6 (SPMIP6) of Macaca fascicularis (Crab-eating macaque).